The chain runs to 238 residues: Sugar fermentation stimulation protein homolog (238 aa).

This sequence belongs to the SfsA family.

The sequence is that of Sugar fermentation stimulation protein homolog from Vibrio parahaemolyticus serotype O3:K6 (strain RIMD 2210633).